We begin with the raw amino-acid sequence, 192 residues long: Phosphoheptose isomerase (192 aa).

An SIS domain is found at 34–192 (VVDAYKAGNK…VERELFVKGK (159 aa)). Residue 49–51 (NGG) participates in substrate binding. Zn(2+)-binding residues include His-58 and Glu-62. Substrate-binding positions include Glu-62, 91–92 (ND), 117–119 (STS), Ser-122, and Gln-169. Positions 169 and 177 each coordinate Zn(2+).

This sequence belongs to the SIS family. GmhA subfamily. In terms of assembly, homotetramer. It depends on Zn(2+) as a cofactor.

The protein localises to the cytoplasm. It catalyses the reaction 2 D-sedoheptulose 7-phosphate = D-glycero-alpha-D-manno-heptose 7-phosphate + D-glycero-beta-D-manno-heptose 7-phosphate. It functions in the pathway carbohydrate biosynthesis; D-glycero-D-manno-heptose 7-phosphate biosynthesis; D-glycero-alpha-D-manno-heptose 7-phosphate and D-glycero-beta-D-manno-heptose 7-phosphate from sedoheptulose 7-phosphate: step 1/1. Functionally, catalyzes the isomerization of sedoheptulose 7-phosphate in D-glycero-D-manno-heptose 7-phosphate. In Citrifermentans bemidjiense (strain ATCC BAA-1014 / DSM 16622 / JCM 12645 / Bem) (Geobacter bemidjiensis), this protein is Phosphoheptose isomerase.